The following is a 520-amino-acid chain: Hydroxymethylglutaryl-CoA synthase, cytoplasmic (520 aa).

A Phosphoserine modification is found at serine 4. Residues aspartate 43 and alanine 44 each coordinate (3S)-3-hydroxy-3-methylglutaryl-CoA. Position 44-46 (44-46 (AGK)) interacts with CoA. Lysine 46 carries the N6-acetyllysine modification. Catalysis depends on glutamate 95, which acts as the Proton donor/acceptor. The (3S)-3-hydroxy-3-methylglutaryl-CoA site is built by cysteine 129, asparagine 167, threonine 171, serine 221, and histidine 264. Cysteine 129 serves as the catalytic Acyl-thioester intermediate. Asparagine 167 contacts CoA. Residue serine 221 coordinates CoA. Catalysis depends on histidine 264, which acts as the Proton donor/acceptor. Residues lysine 269 and lysine 273 each contribute to the CoA site. Lysine 273, asparagine 343, and serine 377 together coordinate (3S)-3-hydroxy-3-methylglutaryl-CoA. Lysine 273 is subject to N6-acetyllysine. Threonine 476 is modified (phosphothreonine). The interval 492 to 520 (HIPSPAKKVPRLPATAAEPEAAVISNGEH) is disordered. A phosphoserine mark is found at serine 495 and serine 516.

The protein belongs to the thiolase-like superfamily. HMG-CoA synthase family. Homodimer.

Its subcellular location is the cytoplasm. The catalysed reaction is acetoacetyl-CoA + acetyl-CoA + H2O = (3S)-3-hydroxy-3-methylglutaryl-CoA + CoA + H(+). It functions in the pathway metabolic intermediate biosynthesis; (R)-mevalonate biosynthesis; (R)-mevalonate from acetyl-CoA: step 2/3. Its function is as follows. Catalyzes the condensation of acetyl-CoA with acetoacetyl-CoA to form HMG-CoA, which is converted by HMG-CoA reductase (HMGCR) into mevalonate, a precursor for cholesterol synthesis. The polypeptide is Hydroxymethylglutaryl-CoA synthase, cytoplasmic (Homo sapiens (Human)).